Reading from the N-terminus, the 451-residue chain is Tubulin gamma-2 chain (451 aa).

A Phosphoserine; by BRSK1 modification is found at Ser-131. 142–148 (AGGTGSG) is a binding site for GTP.

This sequence belongs to the tubulin family. In terms of assembly, component of the gamma-tubulin ring complex (gTuRC) consisting of TUBGCP2, TUBGCP3, TUBGCP4, TUBGCP5 and TUBGCP6 and gamma-tubulin TUBG1 or TUBG2. TUBGCP2, TUBGCP3, TUBGCP4, TUBGCP5 and TUBGCP6 assemble in a 5:5:2:1:1 stoichiometry; each is associated with a gamma-tubulin, thereby arranging 14 gamma-tubulins in a helical manner. Gamma-tubulin at the first position is blocked by TUBGCP3 at the last position, allowing 13 protafilaments to grow into a microtubule. Interacts with alpha-beta tubulin heterodimers; the interaction allows microtubules to nucleate from the gTuRC. Phosphorylation at Ser-131 by BRSK1 regulates centrosome duplication, possibly by mediating relocation of gamma-tubulin and its associated proteins from the cytoplasm to the centrosome.

Its subcellular location is the cytoplasm. The protein localises to the cytoskeleton. It is found in the microtubule organizing center. It localises to the centrosome. Its function is as follows. Tubulin is the major constituent of microtubules, protein filaments consisting of alpha- and beta-tubulin heterodimers. Gamma-tubulin is a key component of the gamma-tubulin ring complex (gTuRC) which mediates microtubule nucleation. The gTuRC regulates the minus-end nucleation of alpha-beta tubulin heterodimers that grow into microtubule protafilaments, a critical step in centrosome duplication and spindle formation. The sequence is that of Tubulin gamma-2 chain (TUBG2) from Homo sapiens (Human).